The sequence spans 426 residues: Enolase (426 aa).

Q163 provides a ligand contact to (2R)-2-phosphoglycerate. The Proton donor role is filled by E205. Residues D242, E286, and D313 each coordinate Mg(2+). Positions 338, 367, 368, and 389 each coordinate (2R)-2-phosphoglycerate. K338 acts as the Proton acceptor in catalysis.

The protein belongs to the enolase family. Requires Mg(2+) as cofactor.

It localises to the cytoplasm. Its subcellular location is the secreted. The protein localises to the cell surface. It carries out the reaction (2R)-2-phosphoglycerate = phosphoenolpyruvate + H2O. Its pathway is carbohydrate degradation; glycolysis; pyruvate from D-glyceraldehyde 3-phosphate: step 4/5. Its function is as follows. Catalyzes the reversible conversion of 2-phosphoglycerate (2-PG) into phosphoenolpyruvate (PEP). It is essential for the degradation of carbohydrates via glycolysis. This Syntrophobacter fumaroxidans (strain DSM 10017 / MPOB) protein is Enolase.